The chain runs to 381 residues: Succinyl-diaminopimelate desuccinylase (381 aa).

Zn(2+) is bound at residue His71. Asp73 is a catalytic residue. Asp104 contributes to the Zn(2+) binding site. Catalysis depends on Glu136, which acts as the Proton acceptor. The Zn(2+) site is built by Glu137, Glu166, and His351.

The protein belongs to the peptidase M20A family. DapE subfamily. In terms of assembly, homodimer. The cofactor is Zn(2+). Co(2+) serves as cofactor.

The catalysed reaction is N-succinyl-(2S,6S)-2,6-diaminopimelate + H2O = (2S,6S)-2,6-diaminopimelate + succinate. The protein operates within amino-acid biosynthesis; L-lysine biosynthesis via DAP pathway; LL-2,6-diaminopimelate from (S)-tetrahydrodipicolinate (succinylase route): step 3/3. Catalyzes the hydrolysis of N-succinyl-L,L-diaminopimelic acid (SDAP), forming succinate and LL-2,6-diaminopimelate (DAP), an intermediate involved in the bacterial biosynthesis of lysine and meso-diaminopimelic acid, an essential component of bacterial cell walls. This chain is Succinyl-diaminopimelate desuccinylase, found in Ehrlichia chaffeensis (strain ATCC CRL-10679 / Arkansas).